The chain runs to 156 residues: MRTPSKQEDLVKAFKALLKEEKFSSQGEIVTALLEEGFENINQSKVSRMLTKFGAVRTRNAKMEMVYCLPAELGVPTATSPLKNLVLDVDYNHPIVVIRTSPGAAQLIARLLDSLGKSEGILGSIAGDDTIFVTLTRDSTTEQLRGAILGLFEQEL.

Belongs to the ArgR family.

It is found in the cytoplasm. It participates in amino-acid biosynthesis; L-arginine biosynthesis [regulation]. Regulates arginine biosynthesis genes. The chain is Arginine repressor from Photorhabdus laumondii subsp. laumondii (strain DSM 15139 / CIP 105565 / TT01) (Photorhabdus luminescens subsp. laumondii).